A 376-amino-acid polypeptide reads, in one-letter code: Carbamoyl phosphate synthase small chain (376 aa).

The CPSase stretch occupies residues M1 to F183. 3 residues coordinate L-glutamine: S46, G232, and G234. The Glutamine amidotransferase type-1 domain maps to T184–R376. The active-site Nucleophile is C260. L-glutamine-binding residues include F261, Q264, N302, G304, and F305. Residues H350 and E352 contribute to the active site.

It belongs to the CarA family. Composed of two chains; the small (or glutamine) chain promotes the hydrolysis of glutamine to ammonia, which is used by the large (or ammonia) chain to synthesize carbamoyl phosphate. Tetramer of heterodimers (alpha,beta)4.

The catalysed reaction is hydrogencarbonate + L-glutamine + 2 ATP + H2O = carbamoyl phosphate + L-glutamate + 2 ADP + phosphate + 2 H(+). It catalyses the reaction L-glutamine + H2O = L-glutamate + NH4(+). Its pathway is amino-acid biosynthesis; L-arginine biosynthesis; carbamoyl phosphate from bicarbonate: step 1/1. It functions in the pathway pyrimidine metabolism; UMP biosynthesis via de novo pathway; (S)-dihydroorotate from bicarbonate: step 1/3. Small subunit of the glutamine-dependent carbamoyl phosphate synthetase (CPSase). CPSase catalyzes the formation of carbamoyl phosphate from the ammonia moiety of glutamine, carbonate, and phosphate donated by ATP, constituting the first step of 2 biosynthetic pathways, one leading to arginine and/or urea and the other to pyrimidine nucleotides. The small subunit (glutamine amidotransferase) binds and cleaves glutamine to supply the large subunit with the substrate ammonia. The protein is Carbamoyl phosphate synthase small chain of Mycobacterium bovis (strain ATCC BAA-935 / AF2122/97).